Reading from the N-terminus, the 558-residue chain is Nucleoprotein (558 aa).

The segment at 54–237 is binding site for the cap structure m7GTP; sequence MRKEKRDDKD…ITEQQSSINI (184 aa). Residues Asp382 and Glu384 each coordinate Mg(2+). Residues Asp382 and Glu384 each coordinate Mn(2+). The Zn(2+) site is built by Glu392, Cys499, His502, and Cys518. Asp522 serves as a coordination point for Mg(2+). Asp522 contributes to the Mn(2+) binding site.

This sequence belongs to the arenaviridae nucleocapsid protein family. As to quaternary structure, homomultimerizes to form the nucleocapsid. Binds to viral genomic RNA. Interacts with glycoprotein G2. Interacts with protein Z; this interaction probably directs the encapsidated genome to budding sites. Interacts with protein L; this interaction does not interfere with Z-L interaction. Interacts with host IKBKE (via Protein kinase domain); the interaction inhibits IKBKE kinase activity.

It localises to the virion. It is found in the host cytoplasm. Encapsidates the genome, protecting it from nucleases. The encapsidated genomic RNA is termed the nucleocapsid (NC). Serves as template for viral transcription and replication. The increased presence of protein N in host cell does not seem to trigger the switch from transcription to replication as observed in other negative strain RNA viruses. Through the interaction with host IKBKE, strongly inhibits the phosphorylation and nuclear translocation of host IRF3, a protein involved in interferon activation pathway, leading to the inhibition of interferon-beta and IRF3-dependent promoters activation. Also encodes a functional 3'-5' exoribonuclease that degrades preferentially dsRNA substrates and thereby participates in the suppression of interferon induction. The chain is Nucleoprotein from Lymphocytic choriomeningitis virus (strain Armstrong) (LCMV).